The chain runs to 580 residues: N(6)-adenosine-methyltransferase catalytic subunit METTL3 (580 aa).

Residues 1–70 (MSDTWSSIQA…PKPSTASAVP (70 aa)) form a disordered region. N-acetylserine; alternate is present on S2. S2 is subject to Phosphoserine; alternate. Residues 28-37 (QDSGHLDLRN) show a composition bias toward basic and acidic residues. S43, S48, and S50 each carry phosphoserine. Glycyl lysine isopeptide (Lys-Gly) (interchain with G-Cter in SUMO1) cross-links involve residues K177, K211, K212, and K215. A disordered region spans residues 198–219 (LNSSASEPAKEPAKKSRKHAAS). Residues 210–215 (AKKSRK) carry the Nuclear localization signal motif. A phosphoserine mark is found at S219 and S243. T348 carries the post-translational modification Phosphothreonine. A Phosphoserine modification is found at S350. S-adenosyl-L-methionine contacts are provided by residues 377-378 (DI) and D395. The segment at 396 to 410 (PPWDIHMELPYGTLT) is gate loop 1. Interaction with METTL14 stretches follow at residues 450-454 (ERVDE) and 464-480 (QRIIRTGRTGHWLNHGK). The segment at 462–479 (QLQRIIRTGRTGHWLNHG) is interphase loop. The segment at 465-478 (RIIRTGRTGHWLNH) is positively charged region required for RNA-binding. The gate loop 2 stretch occupies residues 507-515 (VRSTSHKPD). S-adenosyl-L-methionine contacts are provided by residues K513, 536–539 (RPHN), and 549–550 (NQ).

The protein belongs to the MT-A70-like family. Heterodimer; heterodimerizes with METTL14 to form an antiparallel heterodimer that constitutes an active methyltransferase. Component of the WMM complex, a N6-methyltransferase complex composed of a catalytic subcomplex, named MAC, and of an associated subcomplex, named MACOM. The MAC subcomplex is composed of METTL3 and METTL14. The MACOM subcomplex is composed of WTAP, ZC3H13, CBLL1/HAKAI, VIRMA, and, in some cases of RBM15 (RBM15 or RBM15B). Interacts with NCBP1/CBP80. Interacts with EIF4E. Interacts with EIF3B. Sumoylation inhibits the N6-adenosine-methyltransferase activity. Sumoylation does not affect subcellular location or interaction with METTL14. Desumoylated by SENP1. Widely expressed at low level. Expressed in spleen, thymus, prostate, testis, ovary, small intestine, colon and peripheral blood leukocytes.

It localises to the nucleus. Its subcellular location is the nucleus speckle. It is found in the cytoplasm. It catalyses the reaction an adenosine in mRNA + S-adenosyl-L-methionine = an N(6)-methyladenosine in mRNA + S-adenosyl-L-homocysteine + H(+). Methyltransferase activity is regulated by miRNAs via a sequence pairing mechanism. Methyltransferase activity is inhibited by sumoylation. Its function is as follows. The METTL3-METTL14 heterodimer forms a N6-methyltransferase complex that methylates adenosine residues at the N(6) position of some RNAs and regulates various processes such as the circadian clock, differentiation of embryonic and hematopoietic stem cells, cortical neurogenesis, response to DNA damage, differentiation of T-cells and primary miRNA processing. In the heterodimer formed with METTL14, METTL3 constitutes the catalytic core. N6-methyladenosine (m6A), which takes place at the 5'-[AG]GAC-3' consensus sites of some mRNAs, plays a role in mRNA stability, processing, translation efficiency and editing. M6A acts as a key regulator of mRNA stability: methylation is completed upon the release of mRNA into the nucleoplasm and promotes mRNA destabilization and degradation. In embryonic stem cells (ESCs), m6A methylation of mRNAs encoding key naive pluripotency-promoting transcripts results in transcript destabilization, promoting differentiation of ESCs. M6A regulates the length of the circadian clock: acts as an early pace-setter in the circadian loop by putting mRNA production on a fast-track for facilitating nuclear processing, thereby providing an early point of control in setting the dynamics of the feedback loop. M6A also regulates circadian regulation of hepatic lipid metabolism. M6A regulates spermatogonial differentiation and meiosis and is essential for male fertility and spermatogenesis. Also required for oogenesis. Involved in the response to DNA damage: in response to ultraviolet irradiation, METTL3 rapidly catalyzes the formation of m6A on poly(A) transcripts at DNA damage sites, leading to the recruitment of POLK to DNA damage sites. M6A is also required for T-cell homeostasis and differentiation: m6A methylation of transcripts of SOCS family members (SOCS1, SOCS3 and CISH) in naive T-cells promotes mRNA destabilization and degradation, promoting T-cell differentiation. Inhibits the type I interferon response by mediating m6A methylation of IFNB. M6A also takes place in other RNA molecules, such as primary miRNA (pri-miRNAs). Mediates m6A methylation of Xist RNA, thereby participating in random X inactivation: m6A methylation of Xist leads to target YTHDC1 reader on Xist and promote transcription repression activity of Xist. M6A also regulates cortical neurogenesis: m6A methylation of transcripts related to transcription factors, neural stem cells, the cell cycle and neuronal differentiation during brain development promotes their destabilization and decay, promoting differentiation of radial glial cells. METTL3 mediates methylation of pri-miRNAs, marking them for recognition and processing by DGCR8. Acts as a positive regulator of mRNA translation independently of the methyltransferase activity: promotes translation by interacting with the translation initiation machinery in the cytoplasm. Its overexpression in a number of cancer cells suggests that it may participate in cancer cell proliferation by promoting mRNA translation. During human coronavirus SARS-CoV-2 infection, adds m6A modifications in SARS-CoV-2 RNA leading to decreased RIGI binding and subsequently dampening the sensing and activation of innate immune responses. The sequence is that of N(6)-adenosine-methyltransferase catalytic subunit METTL3 from Homo sapiens (Human).